The primary structure comprises 135 residues: T-cell receptor gamma chain V region V108A (135 aa).

A signal peptide spans 1–18; it reads MLLLRWFTSCCLWVFGLG. Residues 19 to 116 are v segment; the sequence is QLEQTELSVT…EATYYCAVWM (98 aa). Residues 117 to 135 form a j segment region; it reads RWSSGFHKVFAEGTKLIVI.

The chain is T-cell receptor gamma chain V region V108A from Mus musculus (Mouse).